A 920-amino-acid polypeptide reads, in one-letter code: Bifunctional aspartokinase/homoserine dehydrogenase 1, chloroplastic (920 aa).

The segment at 1–21 (MRSLTVASRHPGAAFSTRRRP) is disordered. A chloroplast-targeting transit peptide spans 1–92 (MRSLTVASRH…EAIADLPKGD (92 aa)). The tract at residues 93–341 (MWSVHKFGGT…VSEAVILSTL (249 aa)) is aspartokinase. Positions 342–566 (SYQEAWEMSY…LSKTTLAVGI (225 aa)) are interface. 2 consecutive ACT domains span residues 416-491 (VEGT…VIHN) and 497-574 (TVGL…LIGR). Positions 567–920 (IGPGLIGRTL…RLSSYLGAPS (354 aa)) are homoserine dehydrogenase. Positions 572 and 601 each coordinate NAD(+). Ile-572 provides a ligand contact to NADP(+). Residue Ile-572 participates in NADPH binding. Arg-604, Thr-653, and Lys-677 together coordinate NADP(+). Thr-653 contributes to the NAD(+) binding site. Thr-653 and Lys-677 together coordinate NADPH. Residues Glu-704, Val-707, Ala-709, and Leu-711 each contribute to the Na(+) site. 2 residues coordinate NADP(+): Gly-762 and Glu-765. L-homoserine is bound by residues Glu-765 and Asp-776. Lys-780 acts as the Proton donor in catalysis. Gly-897 is a binding site for NAD(+). Gly-897 contacts NADP(+). Gly-897 contacts NADPH.

It in the N-terminal section; belongs to the aspartokinase family. In the C-terminal section; belongs to the homoserine dehydrogenase family. In terms of assembly, homo- or heterodimer. A metal cation serves as cofactor.

Its subcellular location is the plastid. The protein localises to the chloroplast. The enzyme catalyses L-homoserine + NADP(+) = L-aspartate 4-semialdehyde + NADPH + H(+). It carries out the reaction L-homoserine + NAD(+) = L-aspartate 4-semialdehyde + NADH + H(+). It catalyses the reaction L-aspartate + ATP = 4-phospho-L-aspartate + ADP. It functions in the pathway amino-acid biosynthesis; L-lysine biosynthesis via DAP pathway; (S)-tetrahydrodipicolinate from L-aspartate: step 1/4. Its pathway is amino-acid biosynthesis; L-methionine biosynthesis via de novo pathway; L-homoserine from L-aspartate: step 1/3. The protein operates within amino-acid biosynthesis; L-methionine biosynthesis via de novo pathway; L-homoserine from L-aspartate: step 3/3. It participates in amino-acid biosynthesis; L-threonine biosynthesis; L-threonine from L-aspartate: step 1/5. It functions in the pathway amino-acid biosynthesis; L-threonine biosynthesis; L-threonine from L-aspartate: step 3/5. Its function is as follows. Bifunctional aspartate kinase and homoserine dehydrogenase that catalyzes the first and the third steps toward the synthesis of lysine, methionine and threonine from aspartate. This Zea mays (Maize) protein is Bifunctional aspartokinase/homoserine dehydrogenase 1, chloroplastic (AKHSDH1).